We begin with the raw amino-acid sequence, 1239 residues long: DNA-directed RNA polymerase subunit beta (1239 aa).

The segment at 1182–1239 (IEGAENQLEDKEEKEEEKEENYKEDSDEYDDLREEDVEPDLEELSLDDLDLDDFGDEH) is disordered. Acidic residues-rich tracts occupy residues 1191–1200 (DKEEKEEEKE) and 1206–1239 (DSDE…GDEH).

Belongs to the RNA polymerase beta chain family. In terms of assembly, the RNAP catalytic core consists of 2 alpha, 1 beta, 1 beta' and 1 omega subunit. When a sigma factor is associated with the core the holoenzyme is formed, which can initiate transcription.

It catalyses the reaction RNA(n) + a ribonucleoside 5'-triphosphate = RNA(n+1) + diphosphate. Functionally, DNA-dependent RNA polymerase catalyzes the transcription of DNA into RNA using the four ribonucleoside triphosphates as substrates. In Clostridium botulinum (strain Loch Maree / Type A3), this protein is DNA-directed RNA polymerase subunit beta.